A 258-amino-acid polypeptide reads, in one-letter code: Imidazole glycerol phosphate synthase subunit HisF (258 aa).

Active-site residues include D11 and D130.

This sequence belongs to the HisA/HisF family. Heterodimer of HisH and HisF.

It is found in the cytoplasm. It carries out the reaction 5-[(5-phospho-1-deoxy-D-ribulos-1-ylimino)methylamino]-1-(5-phospho-beta-D-ribosyl)imidazole-4-carboxamide + L-glutamine = D-erythro-1-(imidazol-4-yl)glycerol 3-phosphate + 5-amino-1-(5-phospho-beta-D-ribosyl)imidazole-4-carboxamide + L-glutamate + H(+). The protein operates within amino-acid biosynthesis; L-histidine biosynthesis; L-histidine from 5-phospho-alpha-D-ribose 1-diphosphate: step 5/9. Functionally, IGPS catalyzes the conversion of PRFAR and glutamine to IGP, AICAR and glutamate. The HisF subunit catalyzes the cyclization activity that produces IGP and AICAR from PRFAR using the ammonia provided by the HisH subunit. This is Imidazole glycerol phosphate synthase subunit HisF from Escherichia coli O17:K52:H18 (strain UMN026 / ExPEC).